The chain runs to 270 residues: Urease accessory protein UreD (270 aa).

Belongs to the UreD family. UreD, UreF and UreG form a complex that acts as a GTP-hydrolysis-dependent molecular chaperone, activating the urease apoprotein by helping to assemble the nickel containing metallocenter of UreC. The UreE protein probably delivers the nickel.

The protein resides in the cytoplasm. Required for maturation of urease via the functional incorporation of the urease nickel metallocenter. In Synechocystis sp. (strain ATCC 27184 / PCC 6803 / Kazusa), this protein is Urease accessory protein UreD.